The primary structure comprises 364 residues: Aminomethyltransferase (364 aa).

The protein belongs to the GcvT family. The glycine cleavage system is composed of four proteins: P, T, L and H.

The enzyme catalyses N(6)-[(R)-S(8)-aminomethyldihydrolipoyl]-L-lysyl-[protein] + (6S)-5,6,7,8-tetrahydrofolate = N(6)-[(R)-dihydrolipoyl]-L-lysyl-[protein] + (6R)-5,10-methylene-5,6,7,8-tetrahydrofolate + NH4(+). In terms of biological role, the glycine cleavage system catalyzes the degradation of glycine. The protein is Aminomethyltransferase of Escherichia coli O17:K52:H18 (strain UMN026 / ExPEC).